Consider the following 70-residue polypeptide: Protein SlyX homolog (70 aa).

The protein belongs to the SlyX family.

The sequence is that of Protein SlyX homolog from Shewanella oneidensis (strain ATCC 700550 / JCM 31522 / CIP 106686 / LMG 19005 / NCIMB 14063 / MR-1).